The following is a 497-amino-acid chain: MAARCWVWGFVVALLAVAAAADGEEEEGKWEPLIRMPTEEGDDAEAAAPAPAPAAADYGGTRWAVLVAGSSGYGNYRHQADVCHAYQILQKGGVKEENIVVFMYDDIAHNILNPRPGTIINHPKGGDVYAGVPKDYTGHQVTTENFFAVLLGNKTAVTGGSGKVIDSKPEDHIFIYYSDHGGPGVLGMPNLPYLYAGDFIKVLQKKHASNSYSKMVIYVEACESGSIFEGLMPENLNIYVTTASNAVENSWGTYCPGEEPSPPPEYITCLGDMYSVAWMEDSETHNLKKETIEDQYELVKKRTSNANKLNEGSHVMEYGDKTFKDEKLFLYQGFNPANGNITNELIWPVPKATVNQRDADLLFMWKRYEQLNGVSEDKLRALREIEDTIAHRKHLDSSIDFIGKLVFGFENGPLALEAARSSGQPLVDNWDCLKKMVRIFESQCGSLTQYGMKYMRAFANICNNGVSEAKMMEASINACGRYNSARWSPMTEGGHSA.

An N-terminal signal peptide occupies residues 1 to 23 (MAARCWVWGFVVALLAVAAAADG). Asn153 carries N-linked (GlcNAc...) asparagine glycosylation. Residue His180 is part of the active site. Cys222 (nucleophile) is an active-site residue. A disulfide bridge links Cys255 with Cys269. An N-linked (GlcNAc...) asparagine glycan is attached at Asn340. 2 disulfide bridges follow: Cys432–Cys462 and Cys444–Cys479.

It belongs to the peptidase C13 family. In terms of processing, auto-catalytic activation. Expressed in developing seeds.

Its subcellular location is the protein storage vacuole. It catalyses the reaction Hydrolysis of proteins and small molecule substrates at -Asn-|-Xaa- bonds.. In terms of biological role, asparagine-specific endopeptidase that may be involved in processing of proteins targeted to vacuoles. Cysteine protease required for post-translational proteolysis of seed storage proteins in the protein storage vacuole (PSV) of developing seeds, by processing of proglutelin precursor to mature glutelin subunits, thus contributing to the formation of protein crystalline structures in PSV. This Oryza sativa subsp. japonica (Rice) protein is Vacuolar-processing enzyme beta-isozyme 1.